Here is an 841-residue protein sequence, read N- to C-terminus: Probable alpha-glucuronidase A (841 aa).

Positions 1–20 (MRGLNLFQLILALLLSMVAA) are cleaved as a signal peptide. 15 N-linked (GlcNAc...) asparagine glycosylation sites follow: asparagine 51, asparagine 76, asparagine 85, asparagine 149, asparagine 222, asparagine 279, asparagine 310, asparagine 343, asparagine 450, asparagine 465, asparagine 527, asparagine 576, asparagine 682, asparagine 723, and asparagine 732.

This sequence belongs to the glycosyl hydrolase 67 family.

It is found in the secreted. The catalysed reaction is an alpha-D-glucuronoside + H2O = D-glucuronate + an alcohol. Its function is as follows. Alpha-glucuronidase involved in the hydrolysis of xylan, a major structural heterogeneous polysaccharide found in plant biomass representing the second most abundant polysaccharide in the biosphere, after cellulose. Releases 4-O-methylglucuronic acid from xylan. The polypeptide is Probable alpha-glucuronidase A (aguA) (Aspergillus niger).